Consider the following 98-residue polypeptide: Defensin (98 aa).

3 cysteine pairs are disulfide-bonded: Cys61–Cys88, Cys74–Cys94, and Cys78–Cys96.

This sequence belongs to the invertebrate defensin family. Type 1 subfamily.

The chain is Defensin from Mamestra brassicae (Cabbage moth).